Consider the following 574-residue polypeptide: Ankyrin repeat protein B18 (574 aa).

ANK repeat units follow at residues 56–87, 135–164, 167–213, 217–249, 253–285, and 327–356; these read TGYTALHCYLYNNYFTNDVLKVLLNHGVDVTI, IKSRYMLLKEEDIDENIVSTLLDKGIDPNF, DGYT…NLNA, CGNTPFHLYLSIEMCNNIHMTKMLLTFNPNFEI, HGLTPILCYITSDYIQHDILVMLIHHYETNVGE, and EGKTLLHIACEYNNTHVIDYLIRINGDINA. The 34-residue stretch at 541-574 folds into the F-box domain; sequence KCLLTLLPSEIIYEILYMLTIYDLYNISYPPTKV.

This is Ankyrin repeat protein B18 from Variola virus (isolate Human/India/Ind3/1967) (VARV).